Reading from the N-terminus, the 340-residue chain is Protein RecA (340 aa).

Residue 67-74 (GNESSGKT) coordinates ATP.

Belongs to the RecA family.

It is found in the cytoplasm. Functionally, can catalyze the hydrolysis of ATP in the presence of single-stranded DNA, the ATP-dependent uptake of single-stranded DNA by duplex DNA, and the ATP-dependent hybridization of homologous single-stranded DNAs. It interacts with LexA causing its activation and leading to its autocatalytic cleavage. The sequence is that of Protein RecA from Mycoplasma genitalium (strain ATCC 33530 / DSM 19775 / NCTC 10195 / G37) (Mycoplasmoides genitalium).